A 414-amino-acid chain; its full sequence is L-cysteine:1D-myo-inositol 2-amino-2-deoxy-alpha-D-glucopyranoside ligase (414 aa).

Cys44 provides a ligand contact to Zn(2+). L-cysteinyl-5'-AMP-binding positions include 44–47, Thr59, and 82–84; these read CGIT and NIT. Residues 46-56 carry the 'HIGH' region motif; sequence ITPYDSTHLGH. The short motif at 188-193 is the 'ERGGDP' region element; sequence ERGGDP. Residue Trp228 coordinates L-cysteinyl-5'-AMP. Cys232 contacts Zn(2+). Position 250 to 252 (250 to 252) interacts with L-cysteinyl-5'-AMP; that stretch reads GSD. His257 is a Zn(2+) binding site. Ile284 is an L-cysteinyl-5'-AMP binding site. The short motif at 290–294 is the 'KMSKS' region element; the sequence is KMSKS.

Belongs to the class-I aminoacyl-tRNA synthetase family. MshC subfamily. Monomer. The cofactor is Zn(2+).

It carries out the reaction 1D-myo-inositol 2-amino-2-deoxy-alpha-D-glucopyranoside + L-cysteine + ATP = 1D-myo-inositol 2-(L-cysteinylamino)-2-deoxy-alpha-D-glucopyranoside + AMP + diphosphate + H(+). Functionally, catalyzes the ATP-dependent condensation of GlcN-Ins and L-cysteine to form L-Cys-GlcN-Ins. This Corynebacterium aurimucosum (strain ATCC 700975 / DSM 44827 / CIP 107346 / CN-1) (Corynebacterium nigricans) protein is L-cysteine:1D-myo-inositol 2-amino-2-deoxy-alpha-D-glucopyranoside ligase.